The following is a 335-amino-acid chain: Cytoskeleton protein RodZ (335 aa).

Over 1–111 (MNTEATHDQN…LGKRRKKRDG (111 aa)) the chain is Cytoplasmic. Positions 19–71 (LRNAREQLGLSQQAVAERLCLKVSTVRDIEEDKAPADLASTFLRGYIRSYARL) constitute an HTH cro/C1-type domain. Residues 30 to 49 (QQAVAERLCLKVSTVRDIEE) constitute a DNA-binding region (H-T-H motif). Residues 112–132 (WLMTFTWLVLFVVIGLSGAWW) form a helical; Signal-anchor for type II membrane protein membrane-spanning segment. Residues 133-335 (WQDHKAQQEE…TLNAEQSPAQ (203 aa)) lie on the Periplasmic side of the membrane. A compositionally biased stretch (polar residues) spans 148–164 (DQSSAELNNNQSQSVPL). The segment at 148-244 (DQSSAELNNN…PLPTDQAGVT (97 aa)) is disordered. Composition is skewed to low complexity over residues 165–205 (DTST…DPQQ) and 217–239 (DTAA…LPTD).

It belongs to the RodZ family.

It localises to the cell inner membrane. In terms of biological role, cytoskeletal protein that is involved in cell-shape control through regulation of the length of the long axis. The protein is Cytoskeleton protein RodZ of Escherichia coli O81 (strain ED1a).